A 211-amino-acid chain; its full sequence is Calcipressin-like protein (211 aa).

Phosphoserine occurs at positions 113 and 117. Phosphothreonine is present on Thr182.

The protein belongs to the RCAN family.

Inhibits calcineurin-dependent transcriptional responses by binding to the catalytic domain of calcineurin. This chain is Calcipressin-like protein (RCN1), found in Saccharomyces cerevisiae (strain ATCC 204508 / S288c) (Baker's yeast).